The primary structure comprises 869 residues: Structure-specific endonuclease subunit SLX4 (869 aa).

The span at 40-59 shows a compositional bias: low complexity; sequence SPLSLPSPTSLLDFLSTSTS. Disordered stretches follow at residues 40-79, 92-116, 165-199, 293-323, 351-388, 418-437, and 630-774; these read SPLSLPSPTSLLDFLSTSTSRGPARSDTDGDKTQGKEVLD, NRVVSGTGGKAATGKKLKRRTESPG, KANQTVSLQPETKKSAPKGCNDTTQPADNGHINDL, GLSDSRQSSITEDSESATSKPRRVKAKNPPK, TLLSDEPGKEKNVAKRTSGARCAKPGRKKSATTEKKNE, ANGHSEDRHEQNEGTSHISN, and KTSN…ASET. The segment covering 63 to 79 has biased composition (basic and acidic residues); the sequence is ARSDTDGDKTQGKEVLD. 2 stretches are compositionally biased toward polar residues: residues 165–174 and 294–311; these read KANQTVSLQP and LSDSRQSSITEDSESATS. Basic residues predominate over residues 312-322; the sequence is KPRRVKAKNPP. Composition is skewed to polar residues over residues 647–657 and 664–673; these read VDESTQGQSLG and SIPQTATTQV. Residues 688-700 show a composition bias toward low complexity; it reads VPVPSRRSTSTSK. Residues 765-774 show a composition bias toward polar residues; that stretch reads IPSTGTASET.

It belongs to the SLX4 family. Forms a heterodimer with SLX1. Post-translationally, phosphorylated in response to DNA damage.

Its subcellular location is the nucleus. Functionally, regulatory subunit of the SLX1-SLX4 structure-specific endonuclease that resolves DNA secondary structures generated during DNA repair and recombination. Has endonuclease activity towards branched DNA substrates, introducing single-strand cuts in duplex DNA close to junctions with ss-DNA. This is Structure-specific endonuclease subunit SLX4 from Paracoccidioides brasiliensis (strain Pb18).